Consider the following 413-residue polypeptide: Multifunctional CCA protein (413 aa).

2 residues coordinate ATP: Gly-8 and Arg-11. CTP contacts are provided by Gly-8 and Arg-11. Residues Asp-21 and Asp-23 each coordinate Mg(2+). The ATP site is built by Arg-91, Arg-143, and Arg-146. CTP-binding residues include Arg-91, Arg-143, and Arg-146. An HD domain is found at 232–333 (TGVHVMMVVD…VRFFERSDAL (102 aa)).

It belongs to the tRNA nucleotidyltransferase/poly(A) polymerase family. Bacterial CCA-adding enzyme type 1 subfamily. As to quaternary structure, monomer. Can also form homodimers and oligomers. It depends on Mg(2+) as a cofactor. Requires Ni(2+) as cofactor.

The catalysed reaction is a tRNA precursor + 2 CTP + ATP = a tRNA with a 3' CCA end + 3 diphosphate. It catalyses the reaction a tRNA with a 3' CCA end + 2 CTP + ATP = a tRNA with a 3' CCACCA end + 3 diphosphate. In terms of biological role, catalyzes the addition and repair of the essential 3'-terminal CCA sequence in tRNAs without using a nucleic acid template. Adds these three nucleotides in the order of C, C, and A to the tRNA nucleotide-73, using CTP and ATP as substrates and producing inorganic pyrophosphate. tRNA 3'-terminal CCA addition is required both for tRNA processing and repair. Also involved in tRNA surveillance by mediating tandem CCA addition to generate a CCACCA at the 3' terminus of unstable tRNAs. While stable tRNAs receive only 3'-terminal CCA, unstable tRNAs are marked with CCACCA and rapidly degraded. The protein is Multifunctional CCA protein of Burkholderia ambifaria (strain MC40-6).